We begin with the raw amino-acid sequence, 277 residues long: Urease accessory protein UreD (277 aa).

It belongs to the UreD family. UreD, UreF and UreG form a complex that acts as a GTP-hydrolysis-dependent molecular chaperone, activating the urease apoprotein by helping to assemble the nickel containing metallocenter of UreC. The UreE protein probably delivers the nickel.

It localises to the cytoplasm. Functionally, required for maturation of urease via the functional incorporation of the urease nickel metallocenter. In Pseudomonas entomophila (strain L48), this protein is Urease accessory protein UreD.